The chain runs to 458 residues: Peptidyl-prolyl cis-trans isomerase FKBP4 (458 aa).

Met1 bears the N-acetylmethionine; in peptidyl-prolyl cis-trans isomerase FKBP4; alternate mark. Residues Met1 to Asp24 are disordered. At Thr2 the chain carries N-acetylthreonine; in peptidyl-prolyl cis-trans isomerase FKBP4, N-terminally processed; partial. The region spanning Gly50 to Lys138 is the PPIase FKBP-type 1 domain. Thr143 carries the post-translational modification Phosphothreonine; by CK2. The PPIase FKBP-type 2 domain occupies Gly167–Glu253. Tyr220 is subject to Phosphotyrosine. Residues Leu267 to Thr400 form an interaction with tubulin region. TPR repeat units lie at residues Ser270–Glu303, Leu319–Asn352, and Glu353–Asn386. Lys282 carries the post-translational modification N6-acetyllysine. An Omega-N-methylarginine modification is found at Arg373. The disordered stretch occupies residues Glu428–Ala458. The segment covering His434 to Ala458 has biased composition (basic and acidic residues). Phosphothreonine is present on Thr436. Lys441 is covalently cross-linked (Glycyl lysine isopeptide (Lys-Gly) (interchain with G-Cter in SUMO1)). Ser452 bears the Phosphoserine mark.

In terms of assembly, homodimer. Interacts with GLMN. Associates with HSP90AA1 and HSPA1A/HSPA1B in steroid hormone receptor complexes. Also interacts with peroxisomal phytanoyl-CoA alpha-hydroxylase (PHYH). Interacts with NR3C1 and dynein. Interacts with HSF1 in the HSP90 complex. Associates with tubulin. Interacts with MAPT/TAU. Interacts (via TPR domain) with S100A1, S100A2 and S100A6; the interaction is Ca(2+) dependent. Interaction with S100A1 and S100A2 (but not with S100A6) leads to inhibition of FKBP4-HSP90 interaction. Interacts with dynein; contributes to NR3C1 transport to the nucleus. In terms of processing, phosphorylation by CK2 results in loss of HSP90 binding activity.

It is found in the cytoplasm. The protein localises to the cytosol. The protein resides in the mitochondrion. It localises to the nucleus. Its subcellular location is the cytoskeleton. It carries out the reaction [protein]-peptidylproline (omega=180) = [protein]-peptidylproline (omega=0). Its activity is regulated as follows. Inhibited by FK506. In terms of biological role, immunophilin protein with PPIase and co-chaperone activities. Component of steroid receptors heterocomplexes through interaction with heat-shock protein 90 (HSP90). May play a role in the intracellular trafficking of heterooligomeric forms of steroid hormone receptors between cytoplasm and nuclear compartments. The isomerase activity controls neuronal growth cones via regulation of TRPC1 channel opening. Also acts as a regulator of microtubule dynamics by inhibiting MAPT/TAU ability to promote microtubule assembly. May have a protective role against oxidative stress in mitochondria. The protein is Peptidyl-prolyl cis-trans isomerase FKBP4 (Fkbp4) of Mus musculus (Mouse).